The primary structure comprises 341 residues: GTP 3',8-cyclase (341 aa).

The Radical SAM core domain maps to 11–231; sequence KRERPLRDLR…DLINQHMPTE (221 aa). Arg20 is a GTP binding site. Residues Cys27 and Cys31 each contribute to the [4Fe-4S] cluster site. An S-adenosyl-L-methionine-binding site is contributed by Tyr33. Cys34 is a [4Fe-4S] cluster binding site. Arg75 serves as a coordination point for GTP. Gly79 provides a ligand contact to S-adenosyl-L-methionine. Thr106 contributes to the GTP binding site. Ser130 lines the S-adenosyl-L-methionine pocket. Lys167 is a GTP binding site. S-adenosyl-L-methionine is bound at residue Met201. Positions 265 and 268 each coordinate [4Fe-4S] cluster. 270–272 lines the GTP pocket; sequence RAR. [4Fe-4S] cluster is bound at residue Cys282.

The protein belongs to the radical SAM superfamily. MoaA family. As to quaternary structure, monomer and homodimer. The cofactor is [4Fe-4S] cluster.

The enzyme catalyses GTP + AH2 + S-adenosyl-L-methionine = (8S)-3',8-cyclo-7,8-dihydroguanosine 5'-triphosphate + 5'-deoxyadenosine + L-methionine + A + H(+). The protein operates within cofactor biosynthesis; molybdopterin biosynthesis. Its function is as follows. Catalyzes the cyclization of GTP to (8S)-3',8-cyclo-7,8-dihydroguanosine 5'-triphosphate. In Bacillus velezensis (strain DSM 23117 / BGSC 10A6 / LMG 26770 / FZB42) (Bacillus amyloliquefaciens subsp. plantarum), this protein is GTP 3',8-cyclase.